The chain runs to 292 residues: Small ribosomal subunit biogenesis GTPase RsgA (292 aa).

The region spanning 62–213 (KNSLVRPPIV…IADTPGFSSL (152 aa)) is the CP-type G domain. GTP is bound by residues 111 to 114 (SKMD) and 156 to 164 (GQTGVGKST). The Zn(2+) site is built by C237, C242, H244, and C250.

The protein belongs to the TRAFAC class YlqF/YawG GTPase family. RsgA subfamily. As to quaternary structure, monomer. Associates with 30S ribosomal subunit, binds 16S rRNA. It depends on Zn(2+) as a cofactor.

It localises to the cytoplasm. Its function is as follows. One of several proteins that assist in the late maturation steps of the functional core of the 30S ribosomal subunit. Helps release RbfA from mature subunits. May play a role in the assembly of ribosomal proteins into the subunit. Circularly permuted GTPase that catalyzes slow GTP hydrolysis, GTPase activity is stimulated by the 30S ribosomal subunit. The chain is Small ribosomal subunit biogenesis GTPase RsgA from Streptococcus pneumoniae serotype 4 (strain ATCC BAA-334 / TIGR4).